The sequence spans 106 residues: UPF0213 protein VPA1222 (106 aa).

The region spanning 7–82 (QHWSVYLIRN…KQLTKSKKEQ (76 aa)) is the GIY-YIG domain.

The protein belongs to the UPF0213 family.

This chain is UPF0213 protein VPA1222, found in Vibrio parahaemolyticus serotype O3:K6 (strain RIMD 2210633).